A 376-amino-acid polypeptide reads, in one-letter code: Mitogen-activated protein kinase 6 (376 aa).

In terms of domain architecture, Protein kinase spans 43 to 329 (APPIRPIGRG…VDEALHHPYL (287 aa)). ATP-binding positions include 49–57 (IGRGAYGIV) and Lys72. Catalysis depends on Asp169, which acts as the Proton acceptor. Thr201 is subject to Phosphothreonine. Residues 201–203 (TEY) carry the TXY motif. Tyr203 carries the phosphotyrosine modification.

It belongs to the protein kinase superfamily. CMGC Ser/Thr protein kinase family. MAP kinase subfamily. Post-translationally, dually phosphorylated on Thr-201 and Tyr-203, which activates the enzyme.

The catalysed reaction is L-seryl-[protein] + ATP = O-phospho-L-seryl-[protein] + ADP + H(+). It carries out the reaction L-threonyl-[protein] + ATP = O-phospho-L-threonyl-[protein] + ADP + H(+). With respect to regulation, activated by threonine and tyrosine phosphorylation. In Oryza sativa subsp. japonica (Rice), this protein is Mitogen-activated protein kinase 6 (MPK6).